The following is a 563-amino-acid chain: Ribulokinase (563 aa).

Belongs to the ribulokinase family.

It catalyses the reaction D-ribulose + ATP = D-ribulose 5-phosphate + ADP + H(+). The catalysed reaction is L-ribulose + ATP = L-ribulose 5-phosphate + ADP + H(+). Its pathway is carbohydrate degradation; L-arabinose degradation via L-ribulose; D-xylulose 5-phosphate from L-arabinose (bacterial route): step 2/3. In Mycolicibacterium smegmatis (Mycobacterium smegmatis), this protein is Ribulokinase.